We begin with the raw amino-acid sequence, 165 residues long: Nucleotide-binding protein Cagg_1607 (165 aa).

This sequence belongs to the YajQ family.

Its function is as follows. Nucleotide-binding protein. The protein is Nucleotide-binding protein Cagg_1607 of Chloroflexus aggregans (strain MD-66 / DSM 9485).